Here is a 2004-residue protein sequence, read N- to C-terminus: Immunoglobulin A1 protease (2004 aa).

An N-terminal signal peptide occupies residues 1 to 42 (MEKYFGEKQERFSFRKLSVGLVSATISSLFFMSVLASSSVDA). Residues 43 to 99 (QETAGVHYKYVADSELSSEEKKQLVYDIPTYVENDDETYYLVYKLNSQNQLAELPNT) constitute a propeptide that is removed on maturation. Residues 96–100 (LPNTG) carry the LPXTG sorting signal motif. Thr-99 is subject to Pentaglycyl murein peptidoglycan amidated threonine. A run of 2 helical transmembrane segments spans residues 106–125 (QALV…FAVS) and 132–154 (KTVL…VHAL). Residues 155 to 2004 (ENHLLLNYNT…FRSSIFENKK (1850 aa)) lie on the Extracellular side of the membrane. Disordered stretches follow at residues 194-213 (TTSE…PTKQ), 235-305 (QEQT…NPQD), 373-394 (EIVS…TKKT), and 422-720 (PELP…PEKT). Polar residues-rich tracts occupy residues 197 to 213 (ESEV…PTKQ) and 235 to 246 (QEQTPVSSTKPT). Residues 276–296 (LAEHKNLETKKEEKISPKEKT) show a composition bias toward basic and acidic residues. In terms of domain architecture, G5 spans 314–393 (KPELLYREET…PRIVEKGTKK (80 aa)). 3 tandem repeats follow at residues 419-435 (AIQP…KGEP), 436-452 (EVQP…KGET), and 453-469 (EVQP…KGEP). Residues 419-469 (AIQPELPEAVVSDKGEPEVQPTLPEAVVTDKGETEVQPESPDTVVSDKGEP) are 3 X 17 AA approximate tandem repeats. Residues 485–511 (VKPETPVEKTKEQGPEKTEEVPVKPTE) show a composition bias toward basic and acidic residues. Composition is skewed to polar residues over residues 516 to 529 (NPNE…SIQE) and 538 to 572 (EEST…SVGE). Positions 574–591 (NKPEHNDSKNENSEKTVE) are enriched in basic and acidic residues. Polar residues-rich tracts occupy residues 618 to 639 (EETQ…SNKP) and 648 to 681 (ESNQ…PSNG). Low complexity predominate over residues 682 to 699 (NSTEDVSTESNTSNSNGN). Basic and acidic residues predominate over residues 700-720 (EEIKQENELDPDKKVEEPEKT). Residue His-1645 participates in Zn(2+) binding. The active site involves Glu-1646. 2 residues coordinate Zn(2+): His-1649 and Glu-1669.

It belongs to the peptidase M26 family. Requires Zn(2+) as cofactor. In terms of processing, the Gram-positive cell-wall anchor motif LPXTG is located in the N-terminal part, in contrast to such motifs in other known streptococcal and staphylococcal proteins. The protease could be cleaved by the sortase and anchored in the membrane via the two potential N-terminal transmembrane domains, whereas the propeptide located prior to the LPXTG motif would remain attached to the cell wall peptidoglycan by an amide bond.

Its subcellular location is the secreted. The protein localises to the cell wall. It is found in the membrane. It carries out the reaction Cleavage of Pro-|-Thr bond in the hinge region of the heavy chain of human IgA.. Its function is as follows. Zinc metalloproteinase which cleaves human immunoglobulin A1 (IgA1) in the hinge region, rendering it less efficient in coating the surface of colonizing or invading pneumococci. Strongly contributes to virulence in mice. May be responsible for pneumococcal infection and is potentially involved in distinct stages of pneumococcal disease. This chain is Immunoglobulin A1 protease (iga), found in Streptococcus pneumoniae serotype 4 (strain ATCC BAA-334 / TIGR4).